The chain runs to 326 residues: S-methyl-5'-thioadenosine phosphorylase (326 aa).

Phosphate contacts are provided by residues Ser44, 86–87, and 119–120; these read RH and SA. Met220 contributes to the substrate binding site. Position 221 (Thr221) interacts with phosphate. 244–246 serves as a coordination point for substrate; sequence DYD.

Belongs to the PNP/MTAP phosphorylase family. MTAP subfamily. As to quaternary structure, homohexamer. Dimer of a homotrimer.

The catalysed reaction is S-methyl-5'-thioadenosine + phosphate = 5-(methylsulfanyl)-alpha-D-ribose 1-phosphate + adenine. Its pathway is amino-acid biosynthesis; L-methionine biosynthesis via salvage pathway; S-methyl-5-thio-alpha-D-ribose 1-phosphate from S-methyl-5'-thioadenosine (phosphorylase route): step 1/1. Catalyzes the reversible phosphorylation of S-methyl-5'-thioadenosine (MTA) to adenine and 5-methylthioribose-1-phosphate. Involved in the breakdown of MTA, a major by-product of polyamine biosynthesis. Responsible for the first step in the methionine salvage pathway after MTA has been generated from S-adenosylmethionine. Has broad substrate specificity with 6-aminopurine nucleosides as preferred substrates. In Synechocystis sp. (strain PCC 6803 / GT-S), this protein is S-methyl-5'-thioadenosine phosphorylase.